Here is a 176-residue protein sequence, read N- to C-terminus: Isopentenyl-diphosphate Delta-isomerase (176 aa).

Mn(2+) is bound by residues histidine 22 and histidine 28. Residues 26-160 enclose the Nudix hydrolase domain; it reads LRHKAVSVFV…PERYTPWLRI (135 aa). The active site involves cysteine 62. Histidine 64 provides a ligand contact to Mn(2+). A Mg(2+)-binding site is contributed by glutamate 82. Mn(2+)-binding residues include glutamate 108 and glutamate 110. Glutamate 110 is an active-site residue.

This sequence belongs to the IPP isomerase type 1 family. Mg(2+) serves as cofactor. The cofactor is Mn(2+).

It localises to the cytoplasm. The enzyme catalyses isopentenyl diphosphate = dimethylallyl diphosphate. Its pathway is isoprenoid biosynthesis; dimethylallyl diphosphate biosynthesis; dimethylallyl diphosphate from isopentenyl diphosphate: step 1/1. The protein operates within porphyrin-containing compound metabolism; chlorophyll biosynthesis. Functionally, catalyzes the 1,3-allylic rearrangement of the homoallylic substrate isopentenyl (IPP) to its highly electrophilic allylic isomer, dimethylallyl diphosphate (DMAPP). The polypeptide is Isopentenyl-diphosphate Delta-isomerase (Dinoroseobacter shibae (strain DSM 16493 / NCIMB 14021 / DFL 12)).